Consider the following 656-residue polypeptide: NADH-ubiquinone oxidoreductase chain 5 (656 aa).

Helical transmembrane passes span 4 to 21 (TLII…FFGR), 28 to 50 (AHLI…FFEV), 81 to 103 (LTVS…SISY), 112 to 129 (RFFS…ILVT), 133 to 155 (YLIM…NFWF), 176 to 198 (TLLT…STVF), 208 to 230 (IITI…VGLH), 243 to 262 (VSAL…LLMR), 272 to 294 (TVLV…IGLF), 301 to 319 (VIAY…AVGL), 329 to 351 (LVNH…HAVA), 364 to 386 (EFLP…VPFM), 409 to 431 (IVYF…VLYL), 452 to 471 (LFMT…FGYL), 514 to 536 (FVFT…KLLI), 603 to 625 (SLGN…GLIF), and 629 to 651 (LLYF…FALL).

It belongs to the complex I subunit 5 family.

The protein localises to the mitochondrion inner membrane. The catalysed reaction is a ubiquinone + NADH + 5 H(+)(in) = a ubiquinol + NAD(+) + 4 H(+)(out). Functionally, core subunit of the mitochondrial membrane respiratory chain NADH dehydrogenase (Complex I) that is believed to belong to the minimal assembly required for catalysis. Complex I functions in the transfer of electrons from NADH to the respiratory chain. The immediate electron acceptor for the enzyme is believed to be ubiquinone. This Aspergillus niger protein is NADH-ubiquinone oxidoreductase chain 5 (nad5).